We begin with the raw amino-acid sequence, 151 residues long: Protein SprT-like (151 aa).

Positions 6 to 148 constitute a SprT-like domain; the sequence is LQALVERISL…FCRGKLKKIK (143 aa). Zn(2+) is bound at residue His67. Glu68 is a catalytic residue. His71 lines the Zn(2+) pocket.

This sequence belongs to the SprT family. Zn(2+) serves as cofactor.

The protein localises to the cytoplasm. This Anoxybacillus flavithermus (strain DSM 21510 / WK1) protein is Protein SprT-like.